A 323-amino-acid polypeptide reads, in one-letter code: tRNA N6-adenosine threonylcarbamoyltransferase (323 aa).

Residues histidine 110 and histidine 114 each coordinate Fe cation. Residues 131–135 (VASGG), aspartate 164, glycine 177, and asparagine 264 contribute to the substrate site. Aspartate 288 serves as a coordination point for Fe cation.

This sequence belongs to the KAE1 / TsaD family. The cofactor is Fe(2+).

It localises to the cytoplasm. The enzyme catalyses L-threonylcarbamoyladenylate + adenosine(37) in tRNA = N(6)-L-threonylcarbamoyladenosine(37) in tRNA + AMP + H(+). In terms of biological role, required for the formation of a threonylcarbamoyl group on adenosine at position 37 (t(6)A37) in tRNAs that read codons beginning with adenine. Is involved in the transfer of the threonylcarbamoyl moiety of threonylcarbamoyl-AMP (TC-AMP) to the N6 group of A37, together with TsaE and TsaB. TsaD likely plays a direct catalytic role in this reaction. This chain is tRNA N6-adenosine threonylcarbamoyltransferase, found in Thermus thermophilus (strain ATCC BAA-163 / DSM 7039 / HB27).